A 980-amino-acid chain; its full sequence is Phosphoenolpyruvate carboxylase (980 aa).

Active-site residues include H182 and K625.

The protein belongs to the PEPCase type 1 family. Mg(2+) is required as a cofactor.

The catalysed reaction is oxaloacetate + phosphate = phosphoenolpyruvate + hydrogencarbonate. Forms oxaloacetate, a four-carbon dicarboxylic acid source for the tricarboxylic acid cycle. This chain is Phosphoenolpyruvate carboxylase, found in Bordetella pertussis (strain Tohama I / ATCC BAA-589 / NCTC 13251).